A 445-amino-acid polypeptide reads, in one-letter code: Proline--tRNA ligase (445 aa).

It belongs to the class-II aminoacyl-tRNA synthetase family. ProS type 2 subfamily. Homodimer.

Its subcellular location is the cytoplasm. The catalysed reaction is tRNA(Pro) + L-proline + ATP = L-prolyl-tRNA(Pro) + AMP + diphosphate. Functionally, catalyzes the attachment of proline to tRNA(Pro) in a two-step reaction: proline is first activated by ATP to form Pro-AMP and then transferred to the acceptor end of tRNA(Pro). In Cereibacter sphaeroides (strain ATCC 17029 / ATH 2.4.9) (Rhodobacter sphaeroides), this protein is Proline--tRNA ligase.